A 197-amino-acid chain; its full sequence is MDKKPCNSQDAEVRKGPWTMEEDLILINYIANHGEGVWNSLAKSAGLKRTGKSCRLRWLNYLRPDVRRGNITPEEQLLIMELHAKWGNRWSKIAKHLPGRTDNEIKNYWRTRIQKHIKQAETMNGQAASSEQNDHQEACTSQMSNGPNDNTIDQTYSPTSYSGNVDTFQAGPNFLTEANDNMWSMEDIWSMQLLNGD.

2 HTH myb-type domains span residues 10-62 (DAEV…LNYL) and 63-117 (RPDV…QKHI). 2 consecutive DNA-binding regions (H-T-H motif) follow at residues 38 to 62 (WNSLAKSAGLKRTGKSCRLRWLNYL) and 90 to 113 (WSKIAKHLPGRTDNEIKNYWRTRI). The interval 125 to 158 (GQAASSEQNDHQEACTSQMSNGPNDNTIDQTYSP) is disordered. Polar residues predominate over residues 138–158 (ACTSQMSNGPNDNTIDQTYSP).

In terms of tissue distribution, specifically expressed in flowers, mostly in stigmas, petal tubes and petal limbs, and, to a lower extent, in anthers and stamen. Also present at low levels in roots, stems, leaves and sepals.

The protein localises to the nucleus. In terms of biological role, MYB-type transcription factor controlling the production of volatile organic compounds (VOCs), including floral volatile benzenoids and phenylpropanoids (FVBP), in flowers of fragrant cultivars (e.g. cv. Mitchell and cv. V26) by regulating the expression of ODO1 and EOBI, key regulators of the shikimate pathway, and of several biosynthetic floral scent-related genes including IGS, PAL2 and CFAT. This scent, mostly produced in the evening and night by the petals, attracts the pollinators (e.g. the night-active hawkmoth pollinator Manduca sexta). Binds to and activates the ODO1 and EOBI promoters via MYB binding sites (MBS) 5'-AAACCTAAT-3' and 5'-CTAACT-3'. Regulates the promoters of IGS1, CFAT and PAL2. Controls flowers petal opening by modulating a global transcriptomic switch. The chain is MYB-like transcription factor EOBII from Petunia hybrida (Petunia).